Consider the following 413-residue polypeptide: Arginine biosynthesis bifunctional protein ArgJ (413 aa).

Positions 160, 186, 197, 284, 408, and 413 each coordinate substrate. Catalysis depends on threonine 197, which acts as the Nucleophile.

Belongs to the ArgJ family. In terms of assembly, heterotetramer of two alpha and two beta chains.

It localises to the cytoplasm. The enzyme catalyses N(2)-acetyl-L-ornithine + L-glutamate = N-acetyl-L-glutamate + L-ornithine. The catalysed reaction is L-glutamate + acetyl-CoA = N-acetyl-L-glutamate + CoA + H(+). It participates in amino-acid biosynthesis; L-arginine biosynthesis; L-ornithine and N-acetyl-L-glutamate from L-glutamate and N(2)-acetyl-L-ornithine (cyclic): step 1/1. The protein operates within amino-acid biosynthesis; L-arginine biosynthesis; N(2)-acetyl-L-ornithine from L-glutamate: step 1/4. Catalyzes two activities which are involved in the cyclic version of arginine biosynthesis: the synthesis of N-acetylglutamate from glutamate and acetyl-CoA as the acetyl donor, and of ornithine by transacetylation between N(2)-acetylornithine and glutamate. The chain is Arginine biosynthesis bifunctional protein ArgJ from Burkholderia mallei (strain ATCC 23344).